A 175-amino-acid chain; its full sequence is ATP-dependent protease subunit HslV (175 aa).

Thr-2 is a catalytic residue. 3 residues coordinate Na(+): Gly-157, Cys-160, and Thr-163.

This sequence belongs to the peptidase T1B family. HslV subfamily. As to quaternary structure, a double ring-shaped homohexamer of HslV is capped on each side by a ring-shaped HslU homohexamer. The assembly of the HslU/HslV complex is dependent on binding of ATP.

It localises to the cytoplasm. The enzyme catalyses ATP-dependent cleavage of peptide bonds with broad specificity.. With respect to regulation, allosterically activated by HslU binding. Protease subunit of a proteasome-like degradation complex believed to be a general protein degrading machinery. The protein is ATP-dependent protease subunit HslV of Photobacterium profundum (strain SS9).